Reading from the N-terminus, the 141-residue chain is Putative antiporter subunit mnhB2 (141 aa).

4 helical membrane passes run 10–30, 35–55, 70–90, and 116–136; these read TVTK…FLAG, GGGF…FLAF, ILMI…MFFG, and VFEA…MLSI.

The protein belongs to the CPA3 antiporters (TC 2.A.63) subunit B family. In terms of assembly, may form a heterooligomeric complex that consists of seven subunits: mnhA2, mnhB2, mnhC2, mnhD2, mnhE2, mnhF2 and mnhG2.

The protein resides in the cell membrane. The polypeptide is Putative antiporter subunit mnhB2 (mnhB2) (Staphylococcus saprophyticus subsp. saprophyticus (strain ATCC 15305 / DSM 20229 / NCIMB 8711 / NCTC 7292 / S-41)).